A 24-amino-acid polypeptide reads, in one-letter code: Humanin-like 1 (24 aa).

This sequence belongs to the humanin family. Highly expressed in the kidney, heart muscle and testis.

It localises to the secreted. It is found in the cytoplasm. In terms of biological role, plays a role as a neuroprotective and antiapoptotic factor. This chain is Humanin-like 1, found in Homo sapiens (Human).